The following is a 300-amino-acid chain: Lysenin-related protein 1 (300 aa).

The tract at residues 12-35 (EEIEVDVVSVWKEGYAYENRGNSS) is N-terminal cap domain. Residues 36-109 (VQQKITMTKG…SQVIEHTVTI (74 aa)) are beta-hairpin domain. The segment at 110–158 (PPNKKFTRWKLNADVGGTGIEYMYLIDEVTAIGADLTIPEVNKSRAKIL) is N-terminal cap domain. Residues 159–299 (VGRQIHLGET…EDKWILEVVN (141 aa)) form a C-terminal receptor-binding domain region. An N-(acyl)-sphingosylphosphocholine-binding residues include Lys187, Ser229, Tyr235, and Tyr284. Residues Cys274 and Cys285 are joined by a disulfide bond.

It belongs to the lysenin family. As to quaternary structure, binds to sphingomyelin as a monomer by using its C-terminal domain. Forms a nonamer when sphingomyelin/LRP-1 ratio is lower than ca 500. Oligomerization, but not binding, is influenced by the fluidity of sphingomyelin. Expressed by coelomocytes.

The protein resides in the secreted. It localises to the target cell membrane. In terms of biological role, pore-forming toxin that specifically binds sphingomyelin in the plasma membrane of various cells. Has hemolytic activity. Binding and hemolytic activities of this toxin are 10 times less than those of lysenin and lysenin-related protein 2. The sequence is that of Lysenin-related protein 1 from Eisenia fetida (Red wiggler worm).